We begin with the raw amino-acid sequence, 782 residues long: uncharacterized protein (782 aa).

Disordered stretches follow at residues 1 to 25 and 175 to 195; these read MFSP…STTS and RPRT…EDLR. Over residues 13–25 the composition is skewed to low complexity; it reads ESESVSNCESTTS. The segment covering 183–195 has biased composition (basic and acidic residues); the sequence is RAGDASMSREDLR. 4 coiled-coil regions span residues 223–331, 348–398, 428–601, and 699–743; these read RENR…STLN, LSQF…VSTL, NRIN…QLLN, and TIET…IIAK. The segment at 748–782 is disordered; that stretch reads NIPKTEKSSPMKKVPPIENFRAKSQTSITGLSPVL. The segment covering 769–782 has biased composition (polar residues); the sequence is AKSQTSITGLSPVL.

This is an uncharacterized protein from Caenorhabditis elegans.